The sequence spans 151 residues: Large ribosomal subunit protein uL15 (151 aa).

This sequence belongs to the universal ribosomal protein uL15 family. Part of the 50S ribosomal subunit.

Binds to the 23S rRNA. The protein is Large ribosomal subunit protein uL15 of Hyperthermus butylicus (strain DSM 5456 / JCM 9403 / PLM1-5).